We begin with the raw amino-acid sequence, 106 residues long: P4 prophage-derived uncharacterized protein t2655 (106 aa).

This chain is P4 prophage-derived uncharacterized protein t2655, found in Salmonella typhi.